We begin with the raw amino-acid sequence, 107 residues long: Ig kappa chain V-VI region TEPC 601/TEPC 191 (107 aa).

A framework-1 region spans residues 1 to 23; sequence EIVLTQSPAITAASLGQKVTITC. An intrachain disulfide couples cysteine 23 to cysteine 87. A complementarity-determining-1 region spans residues 24–33; the sequence is SASSSVSYMH. The framework-2 stretch occupies residues 34-48; the sequence is WYQQKSGTSPKPWIY. Residues 49–55 are complementarity-determining-2; the sequence is EISKLAS. The interval 56-87 is framework-3; it reads GVPARFSGSGSGTSYSLTISSMEAEDAAIYYC. The complementarity-determining-3 stretch occupies residues 88–96; it reads QQWNYPLIT. A framework-4 region spans residues 97–106; it reads FGAGTKLELK.

The chain is Ig kappa chain V-VI region TEPC 601/TEPC 191 from Mus musculus (Mouse).